We begin with the raw amino-acid sequence, 196 residues long: Homeobox protein XENK-2 (196 aa).

The tract at residues 48–72 (PSADESPDNDKELSSNPDSGKKRKR) is disordered. The homeobox DNA-binding region spans 69–128 (KRKRRVLFSKAQTYELERRFRQQRYLSAPEREHLASLIRLTPTQVKIWFQNHRYKMKRAR).

It belongs to the NK-2 homeobox family. Forebrain and midbrain.

The protein resides in the nucleus. Its function is as follows. Defines dorsal-ventral domains in developing brain. May play a role in defining positional information along the anterior-posterior (a/p) axis and the dorsal-ventral (d/v) axis of the developing nervous system. May be involved in determining positional or boundary information rather than determining a given cell type. This Xenopus laevis (African clawed frog) protein is Homeobox protein XENK-2.